Here is a 114-residue protein sequence, read N- to C-terminus: Beta-microseminoprotein (114 aa).

The first 20 residues, 1–20 (MNVLLGSVVIFATFVTLCNA), serve as a signal peptide directing secretion. Intrachain disulfides connect cysteine 22–cysteine 70, cysteine 38–cysteine 62, cysteine 57–cysteine 93, cysteine 60–cysteine 69, and cysteine 84–cysteine 107.

This sequence belongs to the beta-microseminoprotein family. In terms of assembly, homodimer; Interacts with PI16. Strongly expressed in prostate, liver, kidney, breast and penis. Also expressed in pancreas, esophagus, stomach, deodenum, colon, trachea, lung, salivary glands and fallopian tube. PSP94 is expressed in lung and breast, whereas PSP57 is found in kidney and bladder.

The protein resides in the secreted. This Homo sapiens (Human) protein is Beta-microseminoprotein (MSMB).